The chain runs to 112 residues: UPF0102 protein Pmob_0702 (112 aa).

Belongs to the UPF0102 family.

This Petrotoga mobilis (strain DSM 10674 / SJ95) protein is UPF0102 protein Pmob_0702.